The sequence spans 320 residues: Malate dehydrogenase (320 aa).

Residues 10–15 (GSGMIG) and Asp34 contribute to the NAD(+) site. Substrate is bound by residues Arg83 and Arg89. Residues Asn96 and 119-121 (ITN) each bind NAD(+). The substrate site is built by Asn121 and Arg152. The Proton acceptor role is filled by His176.

This sequence belongs to the LDH/MDH superfamily. MDH type 3 family.

It carries out the reaction (S)-malate + NAD(+) = oxaloacetate + NADH + H(+). In terms of biological role, catalyzes the reversible oxidation of malate to oxaloacetate. The protein is Malate dehydrogenase of Brucella suis (strain ATCC 23445 / NCTC 10510).